The following is a 427-amino-acid chain: Inward rectifier potassium channel 2 (427 aa).

At 1–81 (MGSVRTNRYS…IFTTCVDIRW (81 aa)) the chain is on the cytoplasmic side. An S-nitrosocysteine modification is found at C76. A helical transmembrane segment spans residues 82-106 (RWMLVIFCLAFVLSWLFFGCVFWLI). Residues 107 to 128 (ALLHGDLDASKESKACVSEVNS) are Extracellular-facing. The segment at residues 129–140 (FTAAFLFSIETQ) is an intramembrane region (helical; Pore-forming). Residues 141–147 (TTIGYGF) constitute an intramembrane region (pore-forming). Positions 142-147 (TIGYGF) match the Selectivity filter motif. Over 148 to 156 (RCVTDECPI) the chain is Extracellular. Residues 157–178 (AVFMVVFQSIVGCIIDAFIIGA) form a helical membrane-spanning segment. Residues 179–427 (VMAKMAKPKK…PRPLRRESEI (249 aa)) are Cytoplasmic-facing. The polyphosphoinositide (PIP2)-binding stretch occupies residues 181–208 (AKMAKPKKRNETLVFSHNAVIAMRDGKL). Positions 384-427 (SKEEDDSENGVPESTSTDTPPDIDLHNQASVPLEPRPLRRESEI) are disordered. The PDZ-binding motif lies at 425 to 427 (SEI).

This sequence belongs to the inward rectifier-type potassium channel (TC 1.A.2.1) family. KCNJ2 subfamily. In terms of assembly, homotetramer. Homomultimeric and heteromultimeric association with KCNJ4/Kir2.3. Can form heteromeric channels with Kir2.6/KCNJ18. Associates, via its PDZ-recognition domain, with a complex containing LIN7A, LIN7B, LIN7C, DLG1, CASK and APBA1. S-nitrosylation increases the open probability and inward rectifying currents.

The protein localises to the cell membrane. The protein resides in the sarcolemma. It localises to the T-tubule. It carries out the reaction K(+)(in) = K(+)(out). With respect to regulation, activated by phosphatidylinositol 4,5 biphosphate (PtdIns(4,5)P2). In terms of biological role, inward rectifier potassium channels are characterized by a greater tendency to allow potassium to flow into the cell rather than out of it. Their voltage dependence is regulated by the concentration of extracellular potassium; as external potassium is raised, the voltage range of the channel opening shifts to more positive voltages. The inward rectification is mainly due to the blockage of outward current by internal magnesium. Blocked by external barium or cesium. Probably participates in establishing action potential waveform and excitability of neuronal and muscle tissues. This is Inward rectifier potassium channel 2 (KCNJ2) from Cavia porcellus (Guinea pig).